The following is a 613-amino-acid chain: Coiled-coil domain-containing protein 116 (613 aa).

The tract at residues 41–68 (KPGRVPHPPSTCGSSALQGQRRNKRHPQ) is disordered. The segment covering 51-60 (TCGSSALQGQ) has biased composition (polar residues). Positions 79 to 104 (ESQVLDSLETVVEKATERMAAMKTEA) form a coiled coil. Disordered stretches follow at residues 329–395 (CRDG…AQVA), 509–541 (RQAS…QATE), and 565–613 (MSAC…EDGV). S386 bears the Phosphoserine mark. A compositionally biased stretch (polar residues) spans 512-539 (SRLSTSHCSTETPSVQQEPATHTAQDQA). Residues 577 to 589 (KSKDMDNEGRDKA) show a composition bias toward basic and acidic residues. Acidic residues predominate over residues 590–613 (EIEDEDEDEFKDEDQDEDKDEDGV).

Its subcellular location is the cytoplasm. The protein resides in the cytoskeleton. The protein localises to the microtubule organizing center. It is found in the centrosome. The chain is Coiled-coil domain-containing protein 116 (CCDC116) from Homo sapiens (Human).